The chain runs to 176 residues: Tubulin polymerization-promoting protein family member 3 (176 aa).

Alanine 2 is subject to N-acetylalanine. The segment at 132 to 152 (TGSHKERFDESGKGKGIAGRQ) is disordered. The segment covering 134 to 144 (SHKERFDESGK) has biased composition (basic and acidic residues).

It belongs to the TPPP family. In terms of tissue distribution, expressed in endometrium during the mid-secretory phase (LH + 7) (at protein level).

It is found in the cytoplasm. The protein resides in the cytoskeleton. In terms of biological role, regulator of microtubule dynamic that has microtubule bundling activity. Required for embryo implantation; possibly by regulating beta-catenin. Also required for decidualization via regulation of beta-catenin. The protein is Tubulin polymerization-promoting protein family member 3 of Homo sapiens (Human).